The sequence spans 172 residues: Histone H1-like protein HC2 (172 aa).

The interval 1-77 is disordered; the sequence is MIGAQKKQSG…TVAKKPAVKK (77 aa). The segment covering 8 to 77 has biased composition (basic residues); the sequence is QSGKKTASRA…TVAKKPAVKK (70 aa).

This sequence belongs to the histone H1/H5 family. HCT subfamily.

In terms of biological role, might have a role in establishing the nucleoid structure of elementary bodies. The polypeptide is Histone H1-like protein HC2 (hctB) (Chlamydia pneumoniae (Chlamydophila pneumoniae)).